Here is a 550-residue protein sequence, read N- to C-terminus: CCR4-NOT transcription complex subunit 6-like-A (550 aa).

The required for interaction with cnot1, cnot3 and cnot7 stretch occupies residues 1–148; sequence MPKEKYDPPD…LYQEPDGMRK (148 aa). LRR repeat units follow at residues 52 to 73, 75 to 96, 98 to 120, and 121 to 143; these read HLTV…IAKL, NLVY…LGNV, SLRE…GRLF, and RLQT…YQEP. The segment at 153–550 is nuclease domain; the sequence is MLDNLSVHPE…INGVHLPSRR (398 aa). E235 contributes to the Mg(2+) binding site. 4 residues coordinate substrate: E235, E271, H355, and P360. Mg(2+) is bound at residue D405. D405 serves as the catalytic Proton donor/acceptor. Residues N407, N474, and F479 each contribute to the substrate site.

It belongs to the CCR4/nocturin family. Component of the CCR4-NOT complex. It depends on Mg(2+) as a cofactor.

The protein localises to the cytoplasm. It is found in the nucleus. It catalyses the reaction Exonucleolytic cleavage of poly(A) to 5'-AMP.. Its function is as follows. Poly(A) nuclease with 3'-5' RNase activity. Catalytic component of the CCR4-NOT complex which is one of the major cellular mRNA deadenylases and is linked to various cellular processes including bulk mRNA degradation, miRNA-mediated repression, translational repression during translational initiation and general transcription regulation. Additional complex functions may be a consequence of its influence on mRNA expression. This Xenopus laevis (African clawed frog) protein is CCR4-NOT transcription complex subunit 6-like-A (cnot6l-a).